The primary structure comprises 448 residues: Asparagine--tRNA ligase (448 aa).

It belongs to the class-II aminoacyl-tRNA synthetase family. As to quaternary structure, homodimer.

It is found in the cytoplasm. It catalyses the reaction tRNA(Asn) + L-asparagine + ATP = L-asparaginyl-tRNA(Asn) + AMP + diphosphate + H(+). The sequence is that of Asparagine--tRNA ligase from Streptococcus thermophilus (strain ATCC BAA-491 / LMD-9).